A 497-amino-acid polypeptide reads, in one-letter code: Serine hydroxymethyltransferase (497 aa).

(6S)-5,6,7,8-tetrahydrofolate is bound by residues Leu-176 and 180–182; that span reads GHL. Residue Lys-289 is modified to N6-(pyridoxal phosphate)lysine.

The protein belongs to the SHMT family. As to quaternary structure, homodimer. Pyridoxal 5'-phosphate is required as a cofactor.

The protein resides in the cytoplasm. The catalysed reaction is (6R)-5,10-methylene-5,6,7,8-tetrahydrofolate + glycine + H2O = (6S)-5,6,7,8-tetrahydrofolate + L-serine. It participates in one-carbon metabolism; tetrahydrofolate interconversion. It functions in the pathway amino-acid biosynthesis; glycine biosynthesis; glycine from L-serine: step 1/1. In terms of biological role, catalyzes the reversible interconversion of serine and glycine with tetrahydrofolate (THF) serving as the one-carbon carrier. This reaction serves as the major source of one-carbon groups required for the biosynthesis of purines, thymidylate, methionine, and other important biomolecules. Also exhibits THF-independent aldolase activity toward beta-hydroxyamino acids, producing glycine and aldehydes, via a retro-aldol mechanism. The polypeptide is Serine hydroxymethyltransferase (Chlamydia caviae (strain ATCC VR-813 / DSM 19441 / 03DC25 / GPIC) (Chlamydophila caviae)).